The chain runs to 447 residues: Protein TIC 40, chloroplastic (447 aa).

Residues 1 to 43 (MENLTLVSCSASSPKLLIGCNFTSSLKNPTGFSRRTPNIVLRC) constitute a chloroplast transit peptide. A chloroplast; inner membrane-targeting transit peptide spans 44 to 76 (SKISASAQSQSPSSRPENTGEIVVVKQRSKAFA). The Chloroplast intermembrane segment spans residues 77–104 (SIFSSSRDQQTTSVASPSVPVPPPSSST). Residues 105–125 (IGSPLFWIGVGVGLSALFSYV) form a helical membrane-spanning segment. The Stromal portion of the chain corresponds to 126–447 (TSNLKKYAMQ…ISQLFPGMTG (322 aa)). A compositionally biased stretch (low complexity) spans 148 to 160 (QNSQFNNSGFPSG). Disordered stretches follow at residues 148 to 214 (QNSQ…DIEV) and 231 to 261 (KNYA…TNSP). Positions 161–171 (SPFPFPFPPQT) are enriched in pro residues. Residues 172 to 186 (SPASSPFQSQSQSSG) are compositionally biased toward low complexity. STI1 domains lie at 310-344 (DPTV…RQQL) and 386-425 (PEEV…IMKY).

As to quaternary structure, part of the Tic complex. Interacts with HSP93, TIC110 and LTD. In terms of tissue distribution, expressed in seedlings, flowers, leaves, stems and roots.

The protein resides in the plastid. It is found in the chloroplast inner membrane. Functionally, involved in protein precursor import into chloroplasts. Part of the motor complex consisting of a co-chaperone (TIC40) and a chaperone (HSP93) associated with the import channel (TIC110). Causes the release of bound transit peptides from TIC110 and stimulates ATP hydrolysis by HSP93. Involved in reinsertion of proteins from the chloroplast stroma into the inner membrane. This chain is Protein TIC 40, chloroplastic (TIC40), found in Arabidopsis thaliana (Mouse-ear cress).